The primary structure comprises 141 residues: MAKKLLRVVKLQLEAGKATPAPPVGPALGQYGVNLMEFCKKFNAATADQAGTLLPVEISVFEDRSFTFIVKTPPASFLVKKAAGLKSGAKEPSKEVVGKIKRKQLREIAETKMQDLNAKDLDAAMKIIAGTARSMGIEIED.

The protein belongs to the universal ribosomal protein uL11 family. In terms of assembly, part of the ribosomal stalk of the 50S ribosomal subunit. Interacts with L10 and the large rRNA to form the base of the stalk. L10 forms an elongated spine to which L12 dimers bind in a sequential fashion forming a multimeric L10(L12)X complex. One or more lysine residues are methylated.

In terms of biological role, forms part of the ribosomal stalk which helps the ribosome interact with GTP-bound translation factors. The sequence is that of Large ribosomal subunit protein uL11 from Petrotoga mobilis (strain DSM 10674 / SJ95).